Reading from the N-terminus, the 461-residue chain is Photosystem II CP43 reaction center protein (461 aa).

Positions 1-2 (ME) are excised as a propeptide. At Thr3 the chain carries N-acetylthreonine. Thr3 carries the post-translational modification Phosphothreonine. The next 5 membrane-spanning stretches (helical) occupy residues 57-81 (LFEV…PHLA), 122-143 (LIGP…KDKN), 166-188 (KAMY…RVIT), 243-263 (KPWA…LSYS), and 279-300 (WFNN…ASQS). Glu355 lines the [CaMn4O5] cluster pocket. Residues 435–459 (RARAAAAGFEKGIDRDNEPVLSMKP) traverse the membrane as a helical segment.

Belongs to the PsbB/PsbC family. PsbC subfamily. As to quaternary structure, PSII is composed of 1 copy each of membrane proteins PsbA, PsbB, PsbC, PsbD, PsbE, PsbF, PsbH, PsbI, PsbJ, PsbK, PsbL, PsbM, PsbT, PsbX, PsbY, PsbZ, Psb30/Ycf12, at least 3 peripheral proteins of the oxygen-evolving complex and a large number of cofactors. It forms dimeric complexes. Binds multiple chlorophylls and provides some of the ligands for the Ca-4Mn-5O cluster of the oxygen-evolving complex. It may also provide a ligand for a Cl- that is required for oxygen evolution. PSII binds additional chlorophylls, carotenoids and specific lipids. is required as a cofactor.

The protein localises to the plastid. Its subcellular location is the chloroplast thylakoid membrane. Functionally, one of the components of the core complex of photosystem II (PSII). It binds chlorophyll and helps catalyze the primary light-induced photochemical processes of PSII. PSII is a light-driven water:plastoquinone oxidoreductase, using light energy to abstract electrons from H(2)O, generating O(2) and a proton gradient subsequently used for ATP formation. This Tupiella akineta (Green alga) protein is Photosystem II CP43 reaction center protein.